A 421-amino-acid chain; its full sequence is MIIMALNCGSSSVKYQLFDWDKKVVVAKGMVERVIVGDSYIVHEVPGRDNYKLEQDCPDHRAAIDLVIRTVTDRECGVLQSVAEISAVGHRVVHGGEKFTCSVRIDDDVLNAVKDVQHLAPLHNPPNIEGIEAARALMPAIPHVAIFDTAFHQTMPEHAFLYPVPYDWYENHGVRRYGFHGTSHLYVSKRAAMLLGKPAEQCNIITMHIGNGVSHCAIKGGVSVDTTMGLTPLEGAVMGTRSGDIDPAIPAFMMQKENLSAKEIDSVLNKKSGILGITGRYTDRRDVIEHAAKGDHRCQLALDIEAYRLKKYIGAYMAAIGKLDAVVFTAGVGEMGAAIREKAIEGLEHIGIHLDRERNAGAMTRKRESLITTDDSPVKVYVIPTDEELVFTEDVVAILNGTYTDHMQFEYSFAKPDFVRT.

Mg(2+) is bound at residue N7. K14 serves as a coordination point for ATP. Residue R91 coordinates substrate. Residue D148 is the Proton donor/acceptor of the active site. Residues 208–212 (HIGNG) and 283–285 (DRR) each bind ATP. Position 387 (E387) interacts with Mg(2+).

This sequence belongs to the acetokinase family. Homodimer. Mg(2+) is required as a cofactor. Mn(2+) serves as cofactor.

Its subcellular location is the cytoplasm. The enzyme catalyses acetate + ATP = acetyl phosphate + ADP. Its pathway is metabolic intermediate biosynthesis; acetyl-CoA biosynthesis; acetyl-CoA from acetate: step 1/2. Its function is as follows. Catalyzes the formation of acetyl phosphate from acetate and ATP. Can also catalyze the reverse reaction. The protein is Acetate kinase of Trichlorobacter lovleyi (strain ATCC BAA-1151 / DSM 17278 / SZ) (Geobacter lovleyi).